Reading from the N-terminus, the 486-residue chain is Cysteine--tRNA ligase (486 aa).

Zn(2+) is bound at residue Cys-27. Positions 29–39 (PTTYNFIHLGN) match the 'HIGH' region motif. Zn(2+) contacts are provided by Cys-207, His-232, and Glu-236. The short motif at 264-268 (KMSKS) is the 'KMSKS' region element. Lys-267 provides a ligand contact to ATP.

Belongs to the class-I aminoacyl-tRNA synthetase family. Monomer. It depends on Zn(2+) as a cofactor.

It localises to the cytoplasm. It carries out the reaction tRNA(Cys) + L-cysteine + ATP = L-cysteinyl-tRNA(Cys) + AMP + diphosphate. This chain is Cysteine--tRNA ligase, found in Desulforamulus reducens (strain ATCC BAA-1160 / DSM 100696 / MI-1) (Desulfotomaculum reducens).